A 156-amino-acid polypeptide reads, in one-letter code: Endoribonuclease YbeY (156 aa).

Positions 115, 119, and 125 each coordinate Zn(2+).

Belongs to the endoribonuclease YbeY family. Zn(2+) is required as a cofactor.

It localises to the cytoplasm. Functionally, single strand-specific metallo-endoribonuclease involved in late-stage 70S ribosome quality control and in maturation of the 3' terminus of the 16S rRNA. This is Endoribonuclease YbeY from Actinobacillus succinogenes (strain ATCC 55618 / DSM 22257 / CCUG 43843 / 130Z).